A 274-amino-acid chain; its full sequence is tRNA-cytidine(32) 2-sulfurtransferase (274 aa).

The PP-loop motif signature appears at Ser-40–Ser-45. Residues Cys-115, Cys-118, and Cys-206 each contribute to the [4Fe-4S] cluster site.

Belongs to the TtcA family. Homodimer. Mg(2+) is required as a cofactor. Requires [4Fe-4S] cluster as cofactor.

It is found in the cytoplasm. It catalyses the reaction cytidine(32) in tRNA + S-sulfanyl-L-cysteinyl-[cysteine desulfurase] + AH2 + ATP = 2-thiocytidine(32) in tRNA + L-cysteinyl-[cysteine desulfurase] + A + AMP + diphosphate + H(+). It participates in tRNA modification. Catalyzes the ATP-dependent 2-thiolation of cytidine in position 32 of tRNA, to form 2-thiocytidine (s(2)C32). The sulfur atoms are provided by the cysteine/cysteine desulfurase (IscS) system. In Pseudomonas putida (strain GB-1), this protein is tRNA-cytidine(32) 2-sulfurtransferase.